We begin with the raw amino-acid sequence, 105 residues long: uncharacterized protein (105 aa).

This is an uncharacterized protein from Rickettsia prowazekii (strain Madrid E).